We begin with the raw amino-acid sequence, 266 residues long: Dihydropteroate synthase (266 aa).

One can recognise a Pterin-binding domain in the interval 12–260 (AAIMGILNVT…DVKANQDIVA (249 aa)). Residue Asn19 coordinates Mg(2+). (7,8-dihydropterin-6-yl)methyl diphosphate contacts are provided by residues Thr59, Asp93, Asn112, Asp176, Lys212, and 248–250 (RVH).

Belongs to the DHPS family. As to quaternary structure, homodimer or homotrimer. Mg(2+) is required as a cofactor.

The catalysed reaction is (7,8-dihydropterin-6-yl)methyl diphosphate + 4-aminobenzoate = 7,8-dihydropteroate + diphosphate. Its pathway is cofactor biosynthesis; tetrahydrofolate biosynthesis; 7,8-dihydrofolate from 2-amino-4-hydroxy-6-hydroxymethyl-7,8-dihydropteridine diphosphate and 4-aminobenzoate: step 1/2. Catalyzes the condensation of para-aminobenzoate (pABA) with 6-hydroxymethyl-7,8-dihydropterin diphosphate (DHPt-PP) to form 7,8-dihydropteroate (H2Pte), the immediate precursor of folate derivatives. The protein is Dihydropteroate synthase (folP) of Streptococcus pyogenes serotype M1.